We begin with the raw amino-acid sequence, 655 residues long: Forkhead box protein O1 (655 aa).

Disordered stretches follow at residues 1–63 (MAEA…SASA) and 116–158 (GCLH…SRRN). Thr24 is modified (phosphothreonine; by PKB/AKT1 or PKB/AKT2 and SGK1). Low complexity predominate over residues 33–63 (SQSNSATSSPAPSGSAAANPDAAAGLPSASA). The segment covering 120-141 (PAPPQPPPPGPLSQHPPVPPAA) has biased composition (pro residues). Residues 159–235 (AWGNLSYADL…VQNEGTGKSS (77 aa)) constitute a DNA-binding region (fork-head). 2 DNA-binding regions span residues 211-218 (NSIRHNLS) and 234-237 (SSWW). Phosphoserine; by STK4/MST1 occurs at positions 212, 218, 234, and 235. The tract at residues 234 to 344 (SSWWMLNPEG…QDDLGEGDVH (111 aa)) is disordered. N6-acetyllysine occurs at positions 245 and 248. Phosphoserine; by CDK1 is present on Ser249. Omega-N-methylarginine; by PRMT1 occurs at positions 251 and 253. Positions 251–253 (RRR) match the Nuclear localization signal motif. Residue Ser256 is modified to Phosphoserine; by PKB/AKT1 and SGK1. N6-acetyllysine occurs at positions 262, 265, and 274. The segment covering 264 to 275 (AKSRSRAAKKKA) has biased composition (basic residues). Positions 283 to 563 (GAGDSPGSQF…RLTQVKTPVQ (281 aa)) are sufficient for interaction with NLK. Phosphoserine occurs at positions 287 and 298. Polar residues predominate over residues 309–326 (NWSTFRPRTSSNASTISG). Ser319 carries the phosphoserine; by PKB/AKT1 modification. At Ser322 the chain carries Phosphoserine; by CK1 and SGK1. Residue Ser325 is modified to Phosphoserine; by CK1. Ser329 is modified (phosphoserine; by DYRK1A). Position 333 is a phosphothreonine (Thr333). A required for interaction with RUNX2 region spans residues 363-459 (SEISNPENME…GGMSQYNCAP (97 aa)). At Lys423 the chain carries N6-acetyllysine. Positions 462 to 466 (LKELL) match the Required for interaction with SIRT1 motif. Positions 507 to 534 (YGSQASHNKMMNPSSHTHPGHAQQTSAV) are enriched in polar residues. The disordered stretch occupies residues 507–537 (YGSQASHNKMMNPSSHTHPGHAQQTSAVNGR).

As to quaternary structure, interacts with LRPPRC. Interacts with RUNX2; the interaction inhibits RUNX2 transcriptional activity and mediates the IGF1/insulin-dependent BGLAP expression in osteoblasts Interacts with PPP2R1A; the interaction regulates the dephosphorylation of FOXO1 at Thr-24 and Ser-256 leading to its nuclear import. Interacts (acetylated form) with PPARG. Interacts with XBP1 isoform 2; this interaction is direct and leads to FOXO1 ubiquitination and degradation via the proteasome pathway. Interacts with NLK. Interacts with SIRT1; the interaction results in the deacetylation of FOXO1 leading to activation of FOXO1-mediated transcription of genes involved in DNA repair and stress resistance. Binds to CDK1. Interacts with the 14-3-3 proteins, YWHAG and YWHAZ; the interactions require insulin-stimulated phosphorylation on Thr-24, promote nuclear exit and loss of transcriptional activity. Interacts with SKP2; the interaction ubiquitinates FOXO1 leading to its proteasomal degradation. The interaction requires the presence of KRIT1. Interacts (via the C-terminal half) with ATF4 (via its DNA-binding domain); the interaction occurs in osteoblasts, regulates glucose homeostasis via suppression of beta-cell proliferation and subsequent decrease in insulin production. Interacts with PRMT1; the interaction methylates FOXO1, prevents PKB/AKT1 phosphorylation and retains FOXO1 in the nucleus. Interacts with EP300 and CREBBP; the interactions acetylate FOXO1. Interacts with SIRT2; the interaction is disrupted in response to oxidative stress or serum deprivation, leading to increased level of acetylated FOXO1, which promotes stress-induced autophagy by stimulating E1-like activating enzyme ATG7. Interacts (acetylated form) with ATG7; the interaction is increased in response to oxidative stress or serum deprivation and promotes the autophagic process leading to cell death. Interacts (via the Fork-head domain) with CEBPA; the interaction increases when FOXO1 is deacetylated. Interacts with WDFY2. Forms a complex with WDFY2 and AKT1. Interacts with CRY1. Interacts with PPIA/CYPA; the interaction promotes FOXO1 dephosphorylation, nuclear accumulation and transcriptional activity. Interacts with TOX4; FOXO1 is required for full induction of TOX4-dependent activity and the interaction is inhibited by insulin. Interacts (when phosphorylated on Ser-256) with STUB1/CHIP. Post-translationally, phosphorylation by NLK promotes nuclear export and inhibits the transcriptional activity. In response to growth factors, phosphorylation on Thr-24, Ser-256 and Ser-322 by PKB/AKT1 promotes nuclear export and inactivation of transactivational activity. Phosphorylation on Thr-24 is required for binding 14-3-3 proteins. Phosphorylation of Ser-256 decreases DNA-binding activity and promotes the phosphorylation of Thr-24 and Ser-319, permitting phosphorylation of Ser-322 and Ser-325, probably by CDK1, leading to nuclear exclusion and loss of function. Stress signals, such as response to oxygen or nitric oxide, attenuate the PKB/AKT1-mediated phosphorylation leading to nuclear retention. Phosphorylation of Ser-329 is independent of IGF1 and leads to reduced function. Dephosphorylated on Thr-24 and Ser-256 by PP2A in beta-cells under oxidative stress leading to nuclear retention. Phosphorylation of Ser-249 by CDK1 disrupts binding of 14-3-3 proteins leading to nuclear accumulation and has no effect on DNA-binding nor transcriptional activity. Phosphorylation by STK4/MST1 on Ser-212, upon oxidative stress, inhibits binding to 14-3-3 proteins and nuclear export. PPIA/CYPA promotes its dephosphorylation on Ser-256. Ubiquitinated by SKP2. Ubiquitination leads to proteasomal degradation. Ubiquitinated by STUB1/CHIP; when Ser-256 is phosphorylated. In terms of processing, methylation inhibits AKT1-mediated phosphorylation at Ser-256 and is increased by oxidative stress. Post-translationally, acetylated. Acetylation at Lys-262, Lys-265 and Lys-274 are necessary for autophagic cell death induction. Deacetylated by SIRT2 in response to oxidative stress or serum deprivation, thereby negatively regulating FOXO1-mediated autophagic cell death. Once in the nucleus, acetylated by CREBBP/EP300. Acetylation diminishes the interaction with target DNA and attenuates the transcriptional activity. It increases the phosphorylation at Ser-256. Deacetylation by SIRT1 results in reactivation of the transcriptional activity. Oxidative stress by hydrogen peroxide treatment appears to promote deacetylation and uncoupling of insulin-induced phosphorylation. By contrast, resveratrol acts independently of acetylation. Acetylated at Lys-423, promoting its localization to the nucleus and transcription factor activity. Deacetylation at Lys-423 by SIRT6, promotes its translocation into the cytoplasm, preventing its transcription factor activity. Deacetylation and subsequent inhibition by SIRT6 has different effects depending on cell types: it inhibits gluconeogenesis in hepatocytes, promotes glucose sensing in pancreatic beta-cells and regulates lipid catabolism in brown adipocytes. As to expression, expressed in umbilical endothelial cells (at protein level). Abundantly expressed in skeletal muscle and ovary, with lower expression in the heart, placenta, lung, liver, pancreas, spleen, testis and small intestine. Weakly expressed in the brain, thymus, prostate and mucosal lining of the colon.

It is found in the cytoplasm. The protein localises to the nucleus. Functionally, transcription factor that is the main target of insulin signaling and regulates metabolic homeostasis in response to oxidative stress. Binds to the insulin response element (IRE) with consensus sequence 5'-TT[G/A]TTTTG-3' and the related Daf-16 family binding element (DBE) with consensus sequence 5'-TT[G/A]TTTAC-3'. Activity suppressed by insulin. Main regulator of redox balance and osteoblast numbers and controls bone mass. Orchestrates the endocrine function of the skeleton in regulating glucose metabolism. Also acts as a key regulator of chondrogenic commitment of skeletal progenitor cells in response to lipid availability: when lipids levels are low, translocates to the nucleus and promotes expression of SOX9, which induces chondrogenic commitment and suppresses fatty acid oxidation. Acts synergistically with ATF4 to suppress osteocalcin/BGLAP activity, increasing glucose levels and triggering glucose intolerance and insulin insensitivity. Also suppresses the transcriptional activity of RUNX2, an upstream activator of osteocalcin/BGLAP. Acts as an inhibitor of glucose sensing in pancreatic beta cells by acting as a transcription repressor and suppressing expression of PDX1. In hepatocytes, promotes gluconeogenesis by acting together with PPARGC1A and CEBPA to activate the expression of genes such as IGFBP1, G6PC1 and PCK1. Also promotes gluconeogenesis by directly promoting expression of PPARGC1A and G6PC1. Important regulator of cell death acting downstream of CDK1, PKB/AKT1 and STK4/MST1. Promotes neural cell death. Mediates insulin action on adipose tissue. Regulates the expression of adipogenic genes such as PPARG during preadipocyte differentiation and, adipocyte size and adipose tissue-specific gene expression in response to excessive calorie intake. Regulates the transcriptional activity of GADD45A and repair of nitric oxide-damaged DNA in beta-cells. Required for the autophagic cell death induction in response to starvation or oxidative stress in a transcription-independent manner. Mediates the function of MLIP in cardiomyocytes hypertrophy and cardiac remodeling. Positive regulator of apoptosis in cardiac smooth muscle cells as a result of its transcriptional activation of pro-apoptotic genes. Regulates endothelial cell (EC) viability and apoptosis in a PPIA/CYPA-dependent manner via transcription of CCL2 and BCL2L11 which are involved in EC chemotaxis and apoptosis. The protein is Forkhead box protein O1 of Homo sapiens (Human).